The primary structure comprises 31 residues: Cytochrome b6-f complex subunit 6 (31 aa).

Residues 3-23 (VFLGYIIFLAAFFGLATGLFL) form a helical membrane-spanning segment.

Belongs to the PetL family. The 4 large subunits of the cytochrome b6-f complex are cytochrome b6, subunit IV (17 kDa polypeptide, PetD), cytochrome f and the Rieske protein, while the 4 small subunits are PetG, PetL, PetM and PetN. The complex functions as a dimer.

Its subcellular location is the plastid. The protein localises to the chloroplast thylakoid membrane. In terms of biological role, component of the cytochrome b6-f complex, which mediates electron transfer between photosystem II (PSII) and photosystem I (PSI), cyclic electron flow around PSI, and state transitions. PetL is important for photoautotrophic growth as well as for electron transfer efficiency and stability of the cytochrome b6-f complex. This Pyropia yezoensis (Susabi-nori) protein is Cytochrome b6-f complex subunit 6.